The sequence spans 114 residues: Putative pterin-4-alpha-carbinolamine dehydratase (114 aa).

The protein belongs to the pterin-4-alpha-carbinolamine dehydratase family.

It carries out the reaction (4aS,6R)-4a-hydroxy-L-erythro-5,6,7,8-tetrahydrobiopterin = (6R)-L-erythro-6,7-dihydrobiopterin + H2O. The polypeptide is Putative pterin-4-alpha-carbinolamine dehydratase (Pseudoalteromonas translucida (strain TAC 125)).